A 171-amino-acid polypeptide reads, in one-letter code: uncharacterized protein (171 aa).

The tract at residues 139-171 is disordered; that stretch reads ARKPTKSDDEEEEVGKMGGISSSINSWVQRQKL. The span at 158–171 shows a compositional bias: polar residues; the sequence is ISSSINSWVQRQKL.

This is an uncharacterized protein from Caenorhabditis elegans.